A 71-amino-acid polypeptide reads, in one-letter code: Small ribosomal subunit protein bS21 (71 aa).

Residues 43–71 are disordered; that stretch reads TERKRAKASAVKRHAKKLARENARRTRLY. Over residues 46–59 the composition is skewed to basic residues; that stretch reads KRAKASAVKRHAKK. Positions 60 to 71 are enriched in basic and acidic residues; it reads LARENARRTRLY.

The protein belongs to the bacterial ribosomal protein bS21 family.

This is Small ribosomal subunit protein bS21 from Edwardsiella ictaluri (strain 93-146).